The chain runs to 332 residues: MREDTKVYDITIIGGGPVGLFTAFYGGMRQASVKIIESLPQLGGQLSALYPEKYIYDVAGFPKIRAQELVDNLKEQMAKFDQTVCLEQAVESVEKQADGIFKLVTNKEIHYSKTVIITAGNGAFQPRKLELESAAQFENANLHYFIDDLNQFAGKRVAVLGGGDSAVDWALMLEPIAKEVSIIHRRDKFRAHEHSVENLRNSKVNVLTPFVPTELIGSERIEQIVIEEVKGERKEIIDVDDVIVNFGFVSSLGPIKNWGLEIEKNSIVVKSTMETNIEGFYAAGDICTYEGKVKLIASGFGEAPTAVNNAKAYMDPKARVQPLHSTSMFENK.

7 residues coordinate FAD: E37, Q45, Y50, V90, F124, D285, and T326.

It belongs to the ferredoxin--NADP reductase type 2 family. In terms of assembly, homodimer. FAD serves as cofactor.

The catalysed reaction is 2 reduced [2Fe-2S]-[ferredoxin] + NADP(+) + H(+) = 2 oxidized [2Fe-2S]-[ferredoxin] + NADPH. The protein is Ferredoxin--NADP reductase 2 of Bacillus licheniformis (strain ATCC 14580 / DSM 13 / JCM 2505 / CCUG 7422 / NBRC 12200 / NCIMB 9375 / NCTC 10341 / NRRL NRS-1264 / Gibson 46).